A 209-amino-acid chain; its full sequence is MTGKKRSASSSRWLQEHFSDKYVQQAQKKGLRSRAWFKLDEIQQSDKLFKPGMTVVDLGAAPGGWSQYVVTQIGGKGRIIACDLLPMDPIVGVDFLQGDFRDELVMKALLERVGDSKVQVVMSDMAPNMSGTPAVDIPRAMYLVELALEMCRDVLAPGGSFVVKVFQGEGFDEYLREIRSLFTKVKVRKPDSSRARSREVYIVATGRKP.

S-adenosyl-L-methionine contacts are provided by Gly63, Trp65, Asp83, Asp99, and Asp124. Residue Lys164 is the Proton acceptor of the active site.

This sequence belongs to the class I-like SAM-binding methyltransferase superfamily. RNA methyltransferase RlmE family.

It is found in the cytoplasm. The catalysed reaction is uridine(2552) in 23S rRNA + S-adenosyl-L-methionine = 2'-O-methyluridine(2552) in 23S rRNA + S-adenosyl-L-homocysteine + H(+). In terms of biological role, specifically methylates the uridine in position 2552 of 23S rRNA at the 2'-O position of the ribose in the fully assembled 50S ribosomal subunit. This is Ribosomal RNA large subunit methyltransferase E from Escherichia coli O81 (strain ED1a).